Reading from the N-terminus, the 320-residue chain is tRNA(Ile)-lysidine synthase, chloroplastic (320 aa).

31-36 (SGGKDS) provides a ligand contact to ATP.

It belongs to the tRNA(Ile)-lysidine synthase family.

The protein resides in the plastid. It is found in the chloroplast. The enzyme catalyses cytidine(34) in tRNA(Ile2) + L-lysine + ATP = lysidine(34) in tRNA(Ile2) + AMP + diphosphate + H(+). Functionally, ligates lysine onto the cytidine present at position 34 of the AUA codon-specific tRNA(Ile) that contains the anticodon CAU, in an ATP-dependent manner. Cytidine is converted to lysidine, thus changing the amino acid specificity of the tRNA from methionine to isoleucine. The polypeptide is tRNA(Ile)-lysidine synthase, chloroplastic (Gracilaria tenuistipitata var. liui (Red alga)).